A 134-amino-acid polypeptide reads, in one-letter code: DNA-directed RNA polymerase subunit omega (134 aa).

It belongs to the RNA polymerase subunit omega family. The RNAP catalytic core consists of 2 alpha, 1 beta, 1 beta' and 1 omega subunit. When a sigma factor is associated with the core the holoenzyme is formed, which can initiate transcription.

The enzyme catalyses RNA(n) + a ribonucleoside 5'-triphosphate = RNA(n+1) + diphosphate. Promotes RNA polymerase assembly. Latches the N- and C-terminal regions of the beta' subunit thereby facilitating its interaction with the beta and alpha subunits. The polypeptide is DNA-directed RNA polymerase subunit omega (Rhizobium etli (strain CIAT 652)).